Reading from the N-terminus, the 453-residue chain is ATP-dependent protease ATPase subunit HslU (453 aa).

ATP contacts are provided by residues Ile18, 60 to 65 (GVGKTE), Asp266, Glu331, and Arg403.

The protein belongs to the ClpX chaperone family. HslU subfamily. In terms of assembly, a double ring-shaped homohexamer of HslV is capped on each side by a ring-shaped HslU homohexamer. The assembly of the HslU/HslV complex is dependent on binding of ATP.

The protein resides in the cytoplasm. ATPase subunit of a proteasome-like degradation complex; this subunit has chaperone activity. The binding of ATP and its subsequent hydrolysis by HslU are essential for unfolding of protein substrates subsequently hydrolyzed by HslV. HslU recognizes the N-terminal part of its protein substrates and unfolds these before they are guided to HslV for hydrolysis. The chain is ATP-dependent protease ATPase subunit HslU from Desulforapulum autotrophicum (strain ATCC 43914 / DSM 3382 / VKM B-1955 / HRM2) (Desulfobacterium autotrophicum).